Reading from the N-terminus, the 412-residue chain is Imidazolonepropionase (412 aa).

2 residues coordinate Fe(3+): His-76 and His-78. Zn(2+) is bound by residues His-76 and His-78. 4-imidazolone-5-propanoate-binding residues include Arg-85, Tyr-148, and His-181. Tyr-148 serves as a coordination point for N-formimidoyl-L-glutamate. His-242 contributes to the Fe(3+) binding site. Position 242 (His-242) interacts with Zn(2+). Glu-245 is a binding site for 4-imidazolone-5-propanoate. Residue Asp-317 participates in Fe(3+) binding. Asp-317 contributes to the Zn(2+) binding site. Residues Asn-319 and Gly-321 each contribute to the N-formimidoyl-L-glutamate site. Residue Ser-322 coordinates 4-imidazolone-5-propanoate.

This sequence belongs to the metallo-dependent hydrolases superfamily. HutI family. It depends on Zn(2+) as a cofactor. Fe(3+) serves as cofactor.

It is found in the cytoplasm. It carries out the reaction 4-imidazolone-5-propanoate + H2O = N-formimidoyl-L-glutamate. It participates in amino-acid degradation; L-histidine degradation into L-glutamate; N-formimidoyl-L-glutamate from L-histidine: step 3/3. Its function is as follows. Catalyzes the hydrolytic cleavage of the carbon-nitrogen bond in imidazolone-5-propanoate to yield N-formimidoyl-L-glutamate. It is the third step in the universal histidine degradation pathway. The chain is Imidazolonepropionase from Staphylococcus saprophyticus subsp. saprophyticus (strain ATCC 15305 / DSM 20229 / NCIMB 8711 / NCTC 7292 / S-41).